Here is a 299-residue protein sequence, read N- to C-terminus: Porphobilinogen deaminase (299 aa).

Position 242 is an S-(dipyrrolylmethanemethyl)cysteine (Cys-242).

Belongs to the HMBS family. As to quaternary structure, monomer. It depends on dipyrromethane as a cofactor.

It carries out the reaction 4 porphobilinogen + H2O = hydroxymethylbilane + 4 NH4(+). It participates in porphyrin-containing compound metabolism; protoporphyrin-IX biosynthesis; coproporphyrinogen-III from 5-aminolevulinate: step 2/4. Tetrapolymerization of the monopyrrole PBG into the hydroxymethylbilane pre-uroporphyrinogen in several discrete steps. This chain is Porphobilinogen deaminase, found in Rickettsia typhi (strain ATCC VR-144 / Wilmington).